The primary structure comprises 149 residues: Deoxyuridine 5'-triphosphate nucleotidohydrolase (149 aa).

Residues 66–68 (RSG), Asn79, 83–85 (TID), and Lys93 each bind substrate.

It belongs to the dUTPase family. The cofactor is Mg(2+).

It catalyses the reaction dUTP + H2O = dUMP + diphosphate + H(+). The protein operates within pyrimidine metabolism; dUMP biosynthesis; dUMP from dCTP (dUTP route): step 2/2. Its function is as follows. This enzyme is involved in nucleotide metabolism: it produces dUMP, the immediate precursor of thymidine nucleotides and it decreases the intracellular concentration of dUTP so that uracil cannot be incorporated into DNA. The chain is Deoxyuridine 5'-triphosphate nucleotidohydrolase from Corynebacterium glutamicum (strain ATCC 13032 / DSM 20300 / JCM 1318 / BCRC 11384 / CCUG 27702 / LMG 3730 / NBRC 12168 / NCIMB 10025 / NRRL B-2784 / 534).